Consider the following 106-residue polypeptide: SDO1-like protein C21C3.19 (106 aa).

It belongs to the SDO1-like family.

The protein localises to the cytoplasm. It is found in the nucleus. Its function is as follows. May play a role in RNA metabolism. In Schizosaccharomyces pombe (strain 972 / ATCC 24843) (Fission yeast), this protein is SDO1-like protein C21C3.19.